Reading from the N-terminus, the 232-residue chain is MKKAVVVFSGGQDSTTCLVQALKEFDEVHAITFDYGQRHKLEIEVAEKVAKDLGVAAHKVMDVGLLNELAISSLTRDDIPVSHELQENGLPNSFVPGRNILFLTLAGIYAYQIGAETVITGVCETDFSGYPDCRDDFVKAMNSALVKGMDRQFEIKTPLMWLNKAETWALADQYDALQLVRESTLTCYNGIIGDGCGDCPSCDLRKAGLDDYLNNKDAVMQSLIQKQKSEDQ.

8–18 (FSGGQDSTTCL) lines the ATP pocket. Residues Cys187, Cys196, Cys199, and Cys202 each contribute to the Zn(2+) site.

It belongs to the QueC family. It depends on Zn(2+) as a cofactor.

The catalysed reaction is 7-carboxy-7-deazaguanine + NH4(+) + ATP = 7-cyano-7-deazaguanine + ADP + phosphate + H2O + H(+). Its pathway is purine metabolism; 7-cyano-7-deazaguanine biosynthesis. In terms of biological role, catalyzes the ATP-dependent conversion of 7-carboxy-7-deazaguanine (CDG) to 7-cyano-7-deazaguanine (preQ(0)). This Vibrio campbellii (strain ATCC BAA-1116) protein is 7-cyano-7-deazaguanine synthase.